A 485-amino-acid polypeptide reads, in one-letter code: MKFIVKLFPEIMIKSETVRKRFAKILTSNIRNILQKYDEETAVVRHWDYIEVRSKNEENREELIALLQRIPGIHHFLEVEEKPFTDLHHIFELTLADVAQQLQGKTFCVRVKRKGKHKFSSIEAERYIGGGLNQHIESAKVRLKNPDVTVRIDIEDDKMMLVKTRHAGIGGYPIGTQEDVLSLISGGFDSGVSSYMLIRRGSRVHYCFFNLGGAAHEIGVKQMAYHIWQRYSASHKVRFITINFEGVVGEILEKVDNGQMGVVLKRMMVRAASKVAQRFNIEAIVTGEALGQVSSQTLTNLRLIDEAADALVLRPLITHDKEQIIAMAKEIGTDDIAKSMPEFCGVISKNPTIKAVREKILEEEGHFNFEILESSVQNAKYLDIRQIAEETEKEVVEVEAISVLGENEVILDIRSPEETDEKPFESGTHDVIQMPFYKLSSQFGSLDQSKNYVLYCERGVMSKLQALYLKENGFSNVRVFAKNIH.

Positions 61–165 constitute a THUMP domain; sequence EELIALLQRI…DDKMMLVKTR (105 aa). Residues 183–184, Lys-265, Gly-287, and Gln-296 each bind ATP; that span reads LI. Cys-344 and Cys-456 are disulfide-bonded. Residues 404–483 enclose the Rhodanese domain; the sequence is LGENEVILDI…FSNVRVFAKN (80 aa). Catalysis depends on Cys-456, which acts as the Cysteine persulfide intermediate.

This sequence belongs to the ThiI family.

It is found in the cytoplasm. The enzyme catalyses [ThiI sulfur-carrier protein]-S-sulfanyl-L-cysteine + a uridine in tRNA + 2 reduced [2Fe-2S]-[ferredoxin] + ATP + H(+) = [ThiI sulfur-carrier protein]-L-cysteine + a 4-thiouridine in tRNA + 2 oxidized [2Fe-2S]-[ferredoxin] + AMP + diphosphate. The catalysed reaction is [ThiS sulfur-carrier protein]-C-terminal Gly-Gly-AMP + S-sulfanyl-L-cysteinyl-[cysteine desulfurase] + AH2 = [ThiS sulfur-carrier protein]-C-terminal-Gly-aminoethanethioate + L-cysteinyl-[cysteine desulfurase] + A + AMP + 2 H(+). The protein operates within cofactor biosynthesis; thiamine diphosphate biosynthesis. Its function is as follows. Catalyzes the ATP-dependent transfer of a sulfur to tRNA to produce 4-thiouridine in position 8 of tRNAs, which functions as a near-UV photosensor. Also catalyzes the transfer of sulfur to the sulfur carrier protein ThiS, forming ThiS-thiocarboxylate. This is a step in the synthesis of thiazole, in the thiamine biosynthesis pathway. The sulfur is donated as persulfide by IscS. The chain is tRNA sulfurtransferase from Haemophilus influenzae (strain 86-028NP).